We begin with the raw amino-acid sequence, 498 residues long: Probable malate:quinone oxidoreductase 2 (498 aa).

It belongs to the MQO family. Requires FAD as cofactor.

The catalysed reaction is (S)-malate + a quinone = a quinol + oxaloacetate. It functions in the pathway carbohydrate metabolism; tricarboxylic acid cycle; oxaloacetate from (S)-malate (quinone route): step 1/1. The chain is Probable malate:quinone oxidoreductase 2 from Staphylococcus epidermidis (strain ATCC 35984 / DSM 28319 / BCRC 17069 / CCUG 31568 / BM 3577 / RP62A).